The sequence spans 402 residues: Major outer membrane porin (402 aa).

The signal sequence occupies residues 1 to 22; sequence MKKLLKSALLFAATGSALSLQA.

It belongs to the chlamydial porin (CP) (TC 1.B.2) family. Part of a disulfide cross-linked outer membrane complex (COMC) composed of the major outer membrane porin (MOMP), the small cysteine-rich protein (OmcA) and the large cysteine-rich periplasmic protein (OmcB).

It is found in the cell outer membrane. Functionally, in elementary bodies (EBs, the infectious stage, which is able to survive outside the host cell) provides the structural integrity of the outer envelope through disulfide cross-links with the small cysteine-rich protein and the large cysteine-rich periplasmic protein. It has been described in publications as the Sarkosyl-insoluble COMC (Chlamydia outer membrane complex), and serves as the functional equivalent of peptidoglycan. It is present but some of the disulfide bonds are reduced in reticulate bodies (RBs). Permits diffusion of specific solutes through the outer membrane. The polypeptide is Major outer membrane porin (ompA) (Chlamydophila psittaci (strain ATCC VR-125 / 6BC) (Chlamydia psittaci)).